Consider the following 618-residue polypeptide: Leucine aminopeptidase 2 (618 aa).

A peptide is bound by residues 139-141 (QCQ) and 271-276 (PYGGME). A Zn(2+)-binding site is contributed by histidine 300. Glutamate 301 serves as the catalytic Proton acceptor. Zn(2+) contacts are provided by histidine 304 and glutamate 323. The Proton donor role is filled by tyrosine 389.

It belongs to the peptidase M1 family. Zn(2+) is required as a cofactor.

The protein resides in the cytoplasm. It localises to the nucleus. The enzyme catalyses an epoxide + H2O = an ethanediol. Aminopeptidase that preferentially cleaves di- and tripeptides. Also has low epoxide hydrolase activity (in vitro). Can hydrolyze the epoxide leukotriene LTA(4) but it forms preferentially 5,6-dihydroxy-7,9,11,14-eicosatetraenoic acid rather than the cytokine leukotriene B(4) as the product compared to the homologous mammalian enzyme (in vitro). In Aspergillus clavatus (strain ATCC 1007 / CBS 513.65 / DSM 816 / NCTC 3887 / NRRL 1 / QM 1276 / 107), this protein is Leucine aminopeptidase 2.